We begin with the raw amino-acid sequence, 406 residues long: Leu/Ile/Val-binding protein homolog 5 (406 aa).

An N-terminal signal peptide occupies residues Met1–Ala29.

The protein belongs to the leucine-binding protein family.

Component of an amino-acid transport system. The polypeptide is Leu/Ile/Val-binding protein homolog 5 (Brucella abortus (strain 2308)).